Consider the following 160-residue polypeptide: Phosphopantetheine adenylyltransferase (160 aa).

A substrate-binding site is contributed by Ser9. Residues 9 to 10 (SF) and His17 each bind ATP. The substrate site is built by Lys41, Thr73, and Arg87. ATP-binding positions include 88-90 (GMR), Glu98, and 123-129 (YTFFSSS).

This sequence belongs to the bacterial CoaD family. As to quaternary structure, homohexamer. The cofactor is Mg(2+).

The protein resides in the cytoplasm. The catalysed reaction is (R)-4'-phosphopantetheine + ATP + H(+) = 3'-dephospho-CoA + diphosphate. Its pathway is cofactor biosynthesis; coenzyme A biosynthesis; CoA from (R)-pantothenate: step 4/5. Reversibly transfers an adenylyl group from ATP to 4'-phosphopantetheine, yielding dephospho-CoA (dPCoA) and pyrophosphate. This is Phosphopantetheine adenylyltransferase from Roseiflexus sp. (strain RS-1).